The primary structure comprises 262 residues: Nodulation protein J (262 aa).

An ABC transmembrane type-2 domain is found at 33 to 259 (ASLLGNLADP…FASIALFRRR (227 aa)). 7 consecutive transmembrane segments (helical) span residues 37 to 57 (GNLADPITNLFGLGFGLGLIV), 64 to 84 (SYIAFLAAGMVAISAMTSATF), 102 to 122 (GILFTQLTLGDIVLGELVWAA), 125 to 145 (SVLAGTAIGIVAATLGYASWT), 149 to 169 (CAIPTIALTGLVFASLAMVVI), 177 to 197 (YFVFYQSLVLTPMVFLCGAVF), and 236 to 256 (LHVGALCVYAVLPFFASIALF).

This sequence belongs to the ABC-2 integral membrane protein family. Lipooligosaccharide exporter (TC 3.A.1.102) subfamily. The complex is composed of two ATP-binding proteins (NodI) and two transmembrane proteins (NodJ).

The protein resides in the cell inner membrane. In terms of biological role, part of the ABC transporter complex NodIJ involved in the export of the nodulation factors (Nod factors), the bacterial signal molecules that induce symbiosis and subsequent nodulation induction. Nod factors are LCO (lipo-chitin oligosaccharide), a modified beta-1,4-linked N-acetylglucosamine oligosaccharide. This subunit encodes the transporter. This chain is Nodulation protein J (nodJ), found in Bradyrhizobium diazoefficiens (strain JCM 10833 / BCRC 13528 / IAM 13628 / NBRC 14792 / USDA 110).